A 408-amino-acid chain; its full sequence is MNFKCVQFQSIFNILFILIISFPGGLIYLLTGSTLSFWLRESEFDKITIGLFGLVNFIYILKFLWGPLLEKISFSTLSNRGYKYCLVITLINCIVCVYVLTSFNPNTNFTPFVLCLIVLAFFSSIYDMLIQSSQMLLITDKNWGISEAACTTGFRIGILISGSGALYLSTIISWQDVYRTMAILCIPSLLLIIFYPLKFKDKMIANDFDKFFSAFYDFIKKPKWIVIISFMLLYRLQDSFLSIMPNMFYLDIGYTKQDLAIGYKAFGMCAAIFGGVIGGFLCRKYEYSYLLKRVLIYHALSSLSFIYLYFLNQDIISLYIAVFCQEFTKGLTMSPFFSYQLKCCSSRYCITQIALITSITNVGTILIGSISGYAATYLGWSYFFIVAGLCFIPAYILILYLPKTINSV.

12 consecutive transmembrane segments (helical) span residues 11–31, 49–69, 84–104, 110–130, 154–174, 177–197, 224–244, 261–281, 294–311, 315–337, 353–373, and 382–402; these read IFNILFILIISFPGGLIYLLT, IGLFGLVNFIYILKFLWGPLL, YCLVITLINCIVCVYVLTSFN, TPFVLCLIVLAFFSSIYDMLI, FRIGILISGSGALYLSTIISW, VYRTMAILCIPSLLLIIFYPL, WIVIISFMLLYRLQDSFLSIM, IGYKAFGMCAAIFGGVIGGFL, VLIYHALSSLSFIYLYFL, IISLYIAVFCQEFTKGLTMSPFF, IALITSITNVGTILIGSISGY, and YFFIVAGLCFIPAYILILYLP.

This sequence belongs to the major facilitator superfamily.

The protein localises to the cell inner membrane. The protein is Putative transporter AmpG 2 (ampG2) of Rickettsia typhi (strain ATCC VR-144 / Wilmington).